Consider the following 875-residue polypeptide: Cell surface glycoprotein (875 aa).

The first 23 residues, 1–23 (MTNTKQKINAVFLSALMVMSVFA), serve as a signal peptide directing secretion. The span at 137–157 (EVQNGGSGDVTGSTLQTSSSG) shows a compositional bias: polar residues. 2 disordered regions span residues 137–158 (EVQNGGSGDVTGSTLQTSSSGP) and 197–217 (LPTADRNNDNGASGSNGDFDV). Positions 205-216 (DNGASGSNGDFD) are enriched in low complexity. N-linked (GlcNAc...) asparagine glycosylation is present at Asn-253. The segment at 380-414 (YPASDSSNDGYASGGSHASSVTVRDTDGDGTDDSE) is disordered. The span at 383–402 (SDSSNDGYASGGSHASSVTV) shows a compositional bias: polar residues. Residues Asn-455, Asn-563, Asn-715, and Asn-774 are each glycosylated (N-linked (GlcNAc...) asparagine). The disordered stretch occupies residues 794–852 (EAGSLEEEQPDTETPEPDTETPEPDTETPEPDTETPEPDTETPEPDTETEEATTEASGP). Residues 797 to 846 (SLEEEQPDTETPEPDTETPEPDTETPEPDTETPEPDTETPEPDTETEEAT) show a composition bias toward acidic residues. The helical transmembrane segment at 851–875 (GPGFTAAIALIALVAAALLAVRRDN) threads the bilayer. The PGF sorting signal signature appears at 852–854 (PGF).

Belongs to the halobacterial S-layer protein family. Post-translationally, asn-455 is glycosylated by a pentasaccharide comprising a hexose, 2 hexuronic acids, a methyl ester of a hexuronic acid and a final hexose. The complete pentasaccharide is first assembled on dolichol phosphate and then transferred the glycan to the target Asn. In terms of processing, cleaved by the archaeosortase ArtA at the C-terminus, with removal of a short hydrophobic segment. Lipidation.

It localises to the secreted. The protein localises to the cell wall. The protein resides in the S-layer. Its subcellular location is the cell membrane. In terms of biological role, S-layer protein. The S-layer is a paracrystalline mono-layered assembly of proteins which coat the surface of the cell. In Haloarcula marismortui (strain ATCC 43049 / DSM 3752 / JCM 8966 / VKM B-1809) (Halobacterium marismortui), this protein is Cell surface glycoprotein (csg1).